The following is a 41-amino-acid chain: uncharacterized protein (41 aa).

This is an uncharacterized protein from Treponema pallidum (strain Nichols).